A 379-amino-acid chain; its full sequence is Putative FBD-associated F-box protein At5g38570 (379 aa).

The 47-residue stretch at 1 to 47 (MDNINGLPDDLLVKILSFVPTYVAVSTCVLSKRWEFLWMWLPNLEFV) folds into the F-box domain. The FBD domain maps to 295–345 (CWNQPSSVLECLLSSLKILNWSAYFGRPQDRDIAVYILKNACHLKTATFLT).

The chain is Putative FBD-associated F-box protein At5g38570 from Arabidopsis thaliana (Mouse-ear cress).